A 185-amino-acid chain; its full sequence is Large ribosomal subunit protein uL5 (185 aa).

The protein belongs to the universal ribosomal protein uL5 family. Part of the 50S ribosomal subunit; part of the 5S rRNA/L5/L18/L25 subcomplex. Contacts the 5S rRNA and the P site tRNA. Forms a bridge to the 30S subunit in the 70S ribosome.

Its function is as follows. This is one of the proteins that bind and probably mediate the attachment of the 5S RNA into the large ribosomal subunit, where it forms part of the central protuberance. In the 70S ribosome it contacts protein S13 of the 30S subunit (bridge B1b), connecting the 2 subunits; this bridge is implicated in subunit movement. Contacts the P site tRNA; the 5S rRNA and some of its associated proteins might help stabilize positioning of ribosome-bound tRNAs. The sequence is that of Large ribosomal subunit protein uL5 from Brucella abortus (strain 2308).